The following is a 256-amino-acid chain: MPRSRALILGVLALTTMLSLCGGEDDIEADHVGTYGISVYQSPGDIGQYTFEFDGDELFYVDLDKKETVWMLPEFGQLASFDPQGGLQNIAVVKHNLGVLTKRSNSTPATNEAPQATVFPKSPVLLGQPNTLICFVDNIFPPVINITWLRNSKSVADGVYETSFFVNRDYSFHKLSYLTFIPSDDDIYDCKVEHWGLEEPVLKHWEPEIPAPMSELTETVVCALGLSVGLVGIVVGTIFIIQGLRSGGTSRHPGPL.

The N-terminal stretch at 1–23 is a signal peptide; it reads MPRSRALILGVLALTTMLSLCGG. An alpha-1 region spans residues 24–111; sequence EDDIEADHVG…KRSNSTPATN (88 aa). Topologically, residues 24-218 are extracellular; sequence EDDIEADHVG…IPAPMSELTE (195 aa). An alpha-2 region spans residues 112 to 205; it reads EAPQATVFPK…GLEEPVLKHW (94 aa). The region spanning 114–206 is the Ig-like C1-type domain; the sequence is PQATVFPKSP…LEEPVLKHWE (93 aa). C134 and C190 are joined by a disulfide. N145 carries N-linked (GlcNAc...) asparagine glycosylation. The interval 206–218 is connecting peptide; that stretch reads EPEIPAPMSELTE. The chain crosses the membrane as a helical span at residues 219–244; that stretch reads TVVCALGLSVGLVGIVVGTIFIIQGL. At 245–256 the chain is on the cytoplasmic side; sequence RSGGTSRHPGPL.

Belongs to the MHC class II family.

The protein localises to the membrane. This is H-2 class II histocompatibility antigen, A-B alpha chain (H2-Aa) from Mus musculus (Mouse).